Consider the following 148-residue polypeptide: SsrA-binding protein (148 aa).

A compositionally biased stretch (basic and acidic residues) spans 129 to 142 (ETEKKRDWEREKAR). The interval 129 to 148 (ETEKKRDWEREKARIMRAGT) is disordered.

It belongs to the SmpB family.

The protein localises to the cytoplasm. Its function is as follows. Required for rescue of stalled ribosomes mediated by trans-translation. Binds to transfer-messenger RNA (tmRNA), required for stable association of tmRNA with ribosomes. tmRNA and SmpB together mimic tRNA shape, replacing the anticodon stem-loop with SmpB. tmRNA is encoded by the ssrA gene; the 2 termini fold to resemble tRNA(Ala) and it encodes a 'tag peptide', a short internal open reading frame. During trans-translation Ala-aminoacylated tmRNA acts like a tRNA, entering the A-site of stalled ribosomes, displacing the stalled mRNA. The ribosome then switches to translate the ORF on the tmRNA; the nascent peptide is terminated with the 'tag peptide' encoded by the tmRNA and targeted for degradation. The ribosome is freed to recommence translation, which seems to be the essential function of trans-translation. The sequence is that of SsrA-binding protein from Burkholderia orbicola (strain AU 1054).